The primary structure comprises 514 residues: Cytochrome P450 monooxygenase aneD (514 aa).

The chain crosses the membrane as a helical span at residues 6-26; that stretch reads ICTLLAVIATTSLGLLFLSII. N-linked (GlcNAc...) asparagine glycans are attached at residues N113, N261, and N347. C424 serves as a coordination point for heme.

Belongs to the cytochrome P450 family. Heme serves as cofactor.

Its subcellular location is the membrane. It catalyses the reaction asperaculane D + reduced [NADPH--hemoprotein reductase] + O2 = asperaculane E + oxidized [NADPH--hemoprotein reductase] + H2O + H(+). The protein operates within secondary metabolite biosynthesis. Its function is as follows. Cytochrome P450 monooxygenase; part of the gene cluster that mediates the biosynthesis of aculenes, a unique type of norsesquiterpenes that contain a nordaucane skeleton linked to an L-proline moiety and are of mixed biosynthetic origin. The pathway begins with the synthesis of dauca-4,7-diene by the terpene cyclase aneC using farnesyl pyrophosphate (FPP) as substrate. The cytochrome P450 monooxygenase aneF then performs the initial oxidation at C-12 of dauca-4,7-diene to yield asperaculane D. Asperaculane D is substrate of the cytochrome P450 monooxygenase aneD for C-10 hydroxylation to yield asperaculane E. The cytochrome P450 monooxygenase aneG then converts asperaculane E into aculene D via C-2 oxidation. The monomodular nonribosomal peptide synthtase aneB adenylates L-proline and the thiohydrolase aneE transfers this activated L-proline derivative to aculenes D and C to produce respectively aculenes B and A. The dioxygenase aneA converts aculene D into aculene C, and aculene B into aculene A by introducing the 5,6-alkene moiety. Asperculanes A, B, C and F, as well as 14-prolyl asperculane C, might be shunt products of the pathway. This Aspergillus aculeatus (strain ATCC 16872 / CBS 172.66 / WB 5094) protein is Cytochrome P450 monooxygenase aneD.